A 357-amino-acid polypeptide reads, in one-letter code: tRNA N6-adenosine threonylcarbamoyltransferase (357 aa).

Residues H115 and H119 each coordinate Fe cation. Substrate-binding positions include 137 to 141 (LASGG), D170, G183, and N281. Residue D309 coordinates Fe cation.

Belongs to the KAE1 / TsaD family. Fe(2+) is required as a cofactor.

It is found in the cytoplasm. The enzyme catalyses L-threonylcarbamoyladenylate + adenosine(37) in tRNA = N(6)-L-threonylcarbamoyladenosine(37) in tRNA + AMP + H(+). Its function is as follows. Required for the formation of a threonylcarbamoyl group on adenosine at position 37 (t(6)A37) in tRNAs that read codons beginning with adenine. Is involved in the transfer of the threonylcarbamoyl moiety of threonylcarbamoyl-AMP (TC-AMP) to the N6 group of A37, together with TsaE and TsaB. TsaD likely plays a direct catalytic role in this reaction. This is tRNA N6-adenosine threonylcarbamoyltransferase from Nitrobacter hamburgensis (strain DSM 10229 / NCIMB 13809 / X14).